A 638-amino-acid polypeptide reads, in one-letter code: Dihydrolipoyllysine-residue acetyltransferase component of pyruvate dehydrogenase complex (638 aa).

Lipoyl-binding domains follow at residues S2–E74 and S117–R191. Residue K40 is modified to N6-lipoyllysine. Over residues P90–S117 the composition is skewed to low complexity. The tract at residues P90–E119 is disordered. K157 is subject to N6-lipoyllysine. The interval A201–A220 is disordered. In terms of domain architecture, Lipoyl-binding 3 spans P222 to R296. Residue K262 is modified to N6-lipoyllysine. Positions A301–A320 are enriched in low complexity. Residues A301 to K336 are disordered. The Peripheral subunit-binding (PSBD) domain maps to H338–V375. A catalytic region spans residues A382–L638. H611 is an active-site residue.

This sequence belongs to the 2-oxoacid dehydrogenase family. In terms of assembly, forms a 24-polypeptide structural core with octahedral symmetry. (R)-lipoate is required as a cofactor.

The catalysed reaction is N(6)-[(R)-dihydrolipoyl]-L-lysyl-[protein] + acetyl-CoA = N(6)-[(R)-S(8)-acetyldihydrolipoyl]-L-lysyl-[protein] + CoA. Functionally, the pyruvate dehydrogenase complex catalyzes the overall conversion of pyruvate to acetyl-CoA and CO(2). It contains multiple copies of three enzymatic components: pyruvate dehydrogenase (E1), dihydrolipoamide acetyltransferase (E2) and lipoamide dehydrogenase (E3). This is Dihydrolipoyllysine-residue acetyltransferase component of pyruvate dehydrogenase complex from Azotobacter vinelandii.